The chain runs to 209 residues: Uracil phosphoribosyltransferase (209 aa).

Residues Arg-79, Arg-104, and 131–139 (DPMLATGGS) each bind 5-phospho-alpha-D-ribose 1-diphosphate. Residues Ile-194 and 199–201 (GDA) each bind uracil. Residue Asp-200 participates in 5-phospho-alpha-D-ribose 1-diphosphate binding.

The protein belongs to the UPRTase family. Mg(2+) is required as a cofactor.

The catalysed reaction is UMP + diphosphate = 5-phospho-alpha-D-ribose 1-diphosphate + uracil. Its pathway is pyrimidine metabolism; UMP biosynthesis via salvage pathway; UMP from uracil: step 1/1. Its activity is regulated as follows. Allosterically activated by GTP. Functionally, catalyzes the conversion of uracil and 5-phospho-alpha-D-ribose 1-diphosphate (PRPP) to UMP and diphosphate. This chain is Uracil phosphoribosyltransferase, found in Bacillus pumilus (strain SAFR-032).